Reading from the N-terminus, the 114-residue chain is Holo-[acyl-carrier-protein] synthase (114 aa).

Residues Asp8 and Glu58 each coordinate Mg(2+).

Belongs to the P-Pant transferase superfamily. AcpS family. Mg(2+) is required as a cofactor.

It localises to the cytoplasm. It carries out the reaction apo-[ACP] + CoA = holo-[ACP] + adenosine 3',5'-bisphosphate + H(+). In terms of biological role, transfers the 4'-phosphopantetheine moiety from coenzyme A to a Ser of acyl-carrier-protein. This Mycoplasma genitalium (strain ATCC 33530 / DSM 19775 / NCTC 10195 / G37) (Mycoplasmoides genitalium) protein is Holo-[acyl-carrier-protein] synthase.